Reading from the N-terminus, the 177-residue chain is ATP-dependent protease subunit HslV (177 aa).

T6 is an active-site residue. Na(+) is bound by residues A162, C165, and T168.

It belongs to the peptidase T1B family. HslV subfamily. As to quaternary structure, a double ring-shaped homohexamer of HslV is capped on each side by a ring-shaped HslU homohexamer. The assembly of the HslU/HslV complex is dependent on binding of ATP.

Its subcellular location is the cytoplasm. It carries out the reaction ATP-dependent cleavage of peptide bonds with broad specificity.. With respect to regulation, allosterically activated by HslU binding. Its function is as follows. Protease subunit of a proteasome-like degradation complex believed to be a general protein degrading machinery. The polypeptide is ATP-dependent protease subunit HslV (Desulfovibrio desulfuricans (strain ATCC 27774 / DSM 6949 / MB)).